Consider the following 179-residue polypeptide: Coatomer subunit zeta-2 (179 aa).

This sequence belongs to the adaptor complexes small subunit family. Oligomeric complex that consists of at least the alpha, beta, beta', gamma, delta, epsilon and zeta subunits.

It is found in the cytoplasm. The protein localises to the golgi apparatus membrane. It localises to the cytoplasmic vesicle. Its subcellular location is the COPI-coated vesicle membrane. The coatomer is a cytosolic protein complex that binds to dilysine motifs and reversibly associates with Golgi non-clathrin-coated vesicles, which further mediate biosynthetic protein transport from the ER, via the Golgi up to the trans Golgi network. Coatomer complex is required for budding from Golgi membranes, and is essential for the retrograde Golgi-to-ER transport of dilysine-tagged proteins. The zeta subunit may be involved in regulating the coat assembly and, hence, the rate of biosynthetic protein transport due to its association-dissociation properties with the coatomer complex. The sequence is that of Coatomer subunit zeta-2 from Arabidopsis thaliana (Mouse-ear cress).